The following is a 271-amino-acid chain: Ribosomal RNA small subunit methyltransferase I (271 aa).

It belongs to the methyltransferase superfamily. RsmI family.

The protein localises to the cytoplasm. It catalyses the reaction cytidine(1402) in 16S rRNA + S-adenosyl-L-methionine = 2'-O-methylcytidine(1402) in 16S rRNA + S-adenosyl-L-homocysteine + H(+). Functionally, catalyzes the 2'-O-methylation of the ribose of cytidine 1402 (C1402) in 16S rRNA. The polypeptide is Ribosomal RNA small subunit methyltransferase I (Campylobacter fetus subsp. fetus (strain 82-40)).